A 378-amino-acid polypeptide reads, in one-letter code: Anhydro-N-acetylmuramic acid kinase (378 aa).

22 to 29 provides a ligand contact to ATP; that stretch reads GTSLDGAD.

It belongs to the anhydro-N-acetylmuramic acid kinase family.

The enzyme catalyses 1,6-anhydro-N-acetyl-beta-muramate + ATP + H2O = N-acetyl-D-muramate 6-phosphate + ADP + H(+). It functions in the pathway amino-sugar metabolism; 1,6-anhydro-N-acetylmuramate degradation. The protein operates within cell wall biogenesis; peptidoglycan recycling. Its function is as follows. Catalyzes the specific phosphorylation of 1,6-anhydro-N-acetylmuramic acid (anhMurNAc) with the simultaneous cleavage of the 1,6-anhydro ring, generating MurNAc-6-P. Is required for the utilization of anhMurNAc either imported from the medium or derived from its own cell wall murein, and thus plays a role in cell wall recycling. The polypeptide is Anhydro-N-acetylmuramic acid kinase (Bordetella petrii (strain ATCC BAA-461 / DSM 12804 / CCUG 43448)).